A 183-amino-acid chain; its full sequence is Peptidyl-tRNA hydrolase (183 aa).

Y14 is a binding site for tRNA. H19 serves as the catalytic Proton acceptor. 2 residues coordinate tRNA: F64 and N66.

It belongs to the PTH family. As to quaternary structure, monomer.

Its subcellular location is the cytoplasm. It carries out the reaction an N-acyl-L-alpha-aminoacyl-tRNA + H2O = an N-acyl-L-amino acid + a tRNA + H(+). Functionally, hydrolyzes ribosome-free peptidyl-tRNAs (with 1 or more amino acids incorporated), which drop off the ribosome during protein synthesis, or as a result of ribosome stalling. In terms of biological role, catalyzes the release of premature peptidyl moieties from peptidyl-tRNA molecules trapped in stalled 50S ribosomal subunits, and thus maintains levels of free tRNAs and 50S ribosomes. This chain is Peptidyl-tRNA hydrolase, found in Syntrophomonas wolfei subsp. wolfei (strain DSM 2245B / Goettingen).